The primary structure comprises 1369 residues: MTIHQGGNSVIDNVPYSLNTNVNDSIYSEKGTGRKDAEDHTPSKITDLEKNVDHSIPSFPENDPKNYSEFVNLNPPKRPDLEHTRGSSWHTASENVNDLAANDSTRVQTPEFITQTMEDENVEVPPLERDERDAAAAHTSKANRNSARQMWAQLMASVRKFKREDEKPILKENLPAINLFEAGIPASLPIAKHFIRDKSGQPVLPIITDLIKVSVLDVEPKHNRIHSTFTIQVEYGTGPHAIRWLIYRQLRDFINLHSHFLFFEFQHRFSGRRMKLPKFPKEVLPYLVKLRGYQKILYSNPSDQLIDETHSISDISWESHSQDGDRTTGQPRHANNGRKKHGNFWTIQGNTLGVYLQEMIHNLQFFPEVNVLYSFLEFSSLGLYLAGAGTFHGKEGFATLKRNYSPTQYMLCCNTTMMKTRSQPFWIIVSESCIILCDNMLSMQPADVFIWDVDFEITRKNFRKAHSKDTNEKIRLSHHSFKIKNRQKVMKLSVRSGRWLQQFINSVQVAQGLTAWCEIHRFDSFAPVRTNVAVQWMVDARDHMWNVSRAIKNAKRCIMIHGWWLSPELQMRRPYSMAHKWRIDRILNEKAHEGVMVYIMIYRNIDATIPIDSFHTKEHLQSLHPNIYVIRSPSHFRQNALFWAHHEKLVVVDDAITFIGGIDLCFGRYDTPQHILYDDKPVADKTGLCEQTWRGKDYSNARVHDFFDLTEPYKDMYDRLAVPRMGWHDVSMCIIGQPARDAARHFVQRWNYLIQCKKPARKTPLLIPPPDFTTDQLTDSQLTGTCEVQVLRSAGLWSLGLVDTVEQSIQNAYVTCIEKSEHFIYIENQFFVTSTTCEGTTIENRVGDALVERIIRAHKNNEKWRGVIMIPLLPGFEGQIDLQEGGSLRLIVECQYRSICHGEHSIFGRLNAKGIDGSKYLRFYGLRGWAHLGENHELVTEMIYVHAKILIADDRVAVIGSANINERSLLGNRDSEIAAVIRDTLTIDSKMDGKPYKVGKFAHTLRKRLMREHLGLETDVLEQREYNMDGLDRDTEWKRVEVWTPDEGNAINGSAYTAEELKMKYRSQSQFTTTPDILRKAEKSMKKLDQRVSLIPSSIEFNIKTQKDKVEFEKNYEKSKKGPDVIANALVGGIPLSLKTKEDSLYELSKFSQCGEDQRPMVLKDPDHLVPEPSRPHCGNGLVFYDDIPLLEVNPISGETIPKFDASSFEDPVCDEFFEDIWSKVASNNTTIYRHIFRCVPDDEMLTWESYNEWKKYGKRFKEEQARWRQEELSNLHETHEKSENDPKNPKAGSQGSGNTSASEDSKTEKPKTRTNNGLQVPDKRVVYDLLRGIRGQLVELPLKWMSTESNARNWLSSIDKIPPLEIYD.

2 disordered regions span residues 27-90 and 318-340; these read YSEK…SSWH and ESHS…GRKK. A compositionally biased stretch (basic and acidic residues) spans 31–53; the sequence is GTGRKDAEDHTPSKITDLEKNVD. The 172-residue stretch at 208–379 folds into the PX domain; that stretch reads TDLIKVSVLD…NVLYSFLEFS (172 aa). PLD phosphodiesterase domains follow at residues 641 to 668 and 941 to 968; these read LFWA…CFGR and EMIY…NERS. The span at 1277 to 1289 shows a compositional bias: basic and acidic residues; that stretch reads HETHEKSENDPKN. The tract at residues 1277–1320 is disordered; it reads HETHEKSENDPKNPKAGSQGSGNTSASEDSKTEKPKTRTNNGLQ. The segment covering 1292–1303 has biased composition (polar residues); that stretch reads AGSQGSGNTSAS.

This sequence belongs to the phospholipase D family.

The protein localises to the cytoplasm. The catalysed reaction is a 1,2-diacyl-sn-glycero-3-phosphocholine + H2O = a 1,2-diacyl-sn-glycero-3-phosphate + choline + H(+). With respect to regulation, activity is slightly stimulated by oleate. In terms of biological role, required for meiosis and spore formation. Seems to be involved in the coordinate induction of late meiotic events. The polypeptide is Phospholipase D1 (pld1) (Schizosaccharomyces pombe (strain 972 / ATCC 24843) (Fission yeast)).